The primary structure comprises 589 residues: Peroxisomal biogenesis factor 8 (589 aa).

The short motif at 587–589 (SKL) is the Microbody targeting signal element.

The protein resides in the peroxisome matrix. Its function is as follows. Required for peroxisome assembly. The protein is Peroxisomal biogenesis factor 8 (PEX8) of Saccharomyces cerevisiae (strain ATCC 204508 / S288c) (Baker's yeast).